The chain runs to 607 residues: Guanine nucleotide-binding protein-like 1 (607 aa).

Residues 1 to 14 are compositionally biased toward basic residues; sequence MPRKKPFSVKQKKK. A disordered region spans residues 1–81; that stretch reads MPRKKPFSVK…GPRGYDPNRY (81 aa). Over residues 15–26 the composition is skewed to basic and acidic residues; sequence QLQDKRERKRGL. A phosphoserine mark is found at serine 32, serine 33, and serine 34. A phosphothreonine mark is found at threonine 48 and threonine 50. 2 positions are modified to phosphoserine: serine 51 and serine 68. The CP-type G domain occupies 178–418; that stretch reads WRQLWRVLEM…LCDCPGLIFP (241 aa). 225 to 228 lines the GTP pocket; that stretch reads NKVD. Serine 324 bears the Phosphoserine mark. GTP contacts are provided by residues 367–374 and 411–415; these read GFPNVGKS and DCPGL. The disordered stretch occupies residues 547–607; that stretch reads GPAGDEEEEE…PYALLGEDEC (61 aa). The segment covering 550–584 has biased composition (acidic residues); the sequence is GDEEEEEEEELSSSCEEEGEEDRDADEEGEGDEET. A phosphoserine mark is found at serine 561, serine 562, and serine 563.

This sequence belongs to the TRAFAC class YlqF/YawG GTPase family.

In terms of biological role, possible regulatory or functional link with the histocompatibility cluster. This is Guanine nucleotide-binding protein-like 1 (GNL1) from Homo sapiens (Human).